Reading from the N-terminus, the 359-residue chain is UDP-N-acetylglucosamine--N-acetylmuramyl-(pentapeptide) pyrophosphoryl-undecaprenol N-acetylglucosamine transferase (359 aa).

UDP-N-acetyl-alpha-D-glucosamine contacts are provided by residues 15 to 17 (SGG), Asn127, Arg164, Ser192, Ile246, 265 to 270 (ALTVSE), and Gln290.

The protein belongs to the glycosyltransferase 28 family. MurG subfamily.

Its subcellular location is the cell membrane. It catalyses the reaction di-trans,octa-cis-undecaprenyl diphospho-N-acetyl-alpha-D-muramoyl-L-alanyl-D-glutamyl-meso-2,6-diaminopimeloyl-D-alanyl-D-alanine + UDP-N-acetyl-alpha-D-glucosamine = di-trans,octa-cis-undecaprenyl diphospho-[N-acetyl-alpha-D-glucosaminyl-(1-&gt;4)]-N-acetyl-alpha-D-muramoyl-L-alanyl-D-glutamyl-meso-2,6-diaminopimeloyl-D-alanyl-D-alanine + UDP + H(+). It functions in the pathway cell wall biogenesis; peptidoglycan biosynthesis. Functionally, cell wall formation. Catalyzes the transfer of a GlcNAc subunit on undecaprenyl-pyrophosphoryl-MurNAc-pentapeptide (lipid intermediate I) to form undecaprenyl-pyrophosphoryl-MurNAc-(pentapeptide)GlcNAc (lipid intermediate II). The sequence is that of UDP-N-acetylglucosamine--N-acetylmuramyl-(pentapeptide) pyrophosphoryl-undecaprenol N-acetylglucosamine transferase from Wigglesworthia glossinidia brevipalpis.